Here is a 119-residue protein sequence, read N- to C-terminus: Large ribosomal subunit protein uL18 (119 aa).

It belongs to the universal ribosomal protein uL18 family. In terms of assembly, part of the 50S ribosomal subunit; part of the 5S rRNA/L5/L18/L25 subcomplex. Contacts the 5S and 23S rRNAs.

This is one of the proteins that bind and probably mediate the attachment of the 5S RNA into the large ribosomal subunit, where it forms part of the central protuberance. The chain is Large ribosomal subunit protein uL18 from Anaeromyxobacter dehalogenans (strain 2CP-C).